A 394-amino-acid polypeptide reads, in one-letter code: Tyrosine--tRNA ligase, cytoplasmic (394 aa).

The residue at position 2 (serine 2) is an N-acetylserine. Tyrosine 43 is an L-tyrosine binding site. The short motif at 48-56 (PTGRPHCGY) is the 'HIGH' region element. 4 residues coordinate L-tyrosine: tyrosine 170, glutamine 174, aspartate 177, and glutamine 192. The short motif at 227–231 (KMSAS) is the 'KMSKS' region element. Serine 235 bears the Phosphoserine mark. The interval 348–394 (QEASEKGYPVATPQKSKKAKKPKNKGTKYPGATKTNEIATKLEETKL) is disordered. A Phosphothreonine modification is found at threonine 359. Positions 360–378 (PQKSKKAKKPKNKGTKYPG) match the Nuclear localization signal motif. The span at 362–373 (KSKKAKKPKNKG) shows a compositional bias: basic residues.

Belongs to the class-I aminoacyl-tRNA synthetase family. Homodimer. Interacts with KNR4/SMI1.

It localises to the cytoplasm. It is found in the nucleus. It carries out the reaction tRNA(Tyr) + L-tyrosine + ATP = L-tyrosyl-tRNA(Tyr) + AMP + diphosphate + H(+). Its activity is regulated as follows. Inhibited by N-ethylmaleimide and p-chloromercuribenzoate. In terms of biological role, catalyzes the attachment of L-tyrosine to tRNA(Tyr) in a two-step reaction: L-tyrosine is first activated by ATP to form Tyr-AMP and then transferred to the acceptor end of tRNA(Tyr). The specificity determinants on tRNA(Tyr) are the base pair C1-G72, the discriminator residue A73, and the three anticodon bases G34, U35 and A36. Also involved in nuclear tRNA export. Also attaches D-Tyr to tRNA(Tyr), this reaction is about 150-fold less efficient than attachment of L-Tyr. The protein is Tyrosine--tRNA ligase, cytoplasmic of Saccharomyces cerevisiae (strain ATCC 204508 / S288c) (Baker's yeast).